A 288-amino-acid polypeptide reads, in one-letter code: Sulfhydrogenase 2 subunit gamma (288 aa).

The 100-residue stretch at 4 to 103 (YRSYDARIIE…RGPYGNGFPM (100 aa)) folds into the FAD-binding FR-type domain. Positions 250, 255, 258, and 270 each coordinate [2Fe-2S] cluster.

Dimer of heterotetramer of alpha, beta, gamma and delta subunits. The nickel-containing alpha and delta subunits constitute the hydrogenase activity. The beta and gamma subunits (flavin-containing dimer) constitute the sulfur reductase activity. FAD serves as cofactor. Requires [2Fe-2S] cluster as cofactor.

The protein localises to the cytoplasm. The catalysed reaction is n sulfur + H2 = (n-1) sulfur + hydrogen sulfide + H(+). Functionally, part of a bifunctional enzyme complex that functions as a hydrogen-evolving hydrogenase with sulfur-reducing activity. May play a role in hydrogen cycling during fermentative growth. Activity exhibited with NAD in addition to NADPH. The beta and gamma subunits form the sulfur-reducing component that catalyzes the cytoplasmic production of hydrogen sulfide in the presence of elemental sulfur. The sequence is that of Sulfhydrogenase 2 subunit gamma from Pyrococcus furiosus (strain ATCC 43587 / DSM 3638 / JCM 8422 / Vc1).